The sequence spans 352 residues: S-adenosylmethionine:tRNA ribosyltransferase-isomerase (352 aa).

Belongs to the QueA family. Monomer.

The protein localises to the cytoplasm. It carries out the reaction 7-aminomethyl-7-carbaguanosine(34) in tRNA + S-adenosyl-L-methionine = epoxyqueuosine(34) in tRNA + adenine + L-methionine + 2 H(+). Its pathway is tRNA modification; tRNA-queuosine biosynthesis. Its function is as follows. Transfers and isomerizes the ribose moiety from AdoMet to the 7-aminomethyl group of 7-deazaguanine (preQ1-tRNA) to give epoxyqueuosine (oQ-tRNA). The sequence is that of S-adenosylmethionine:tRNA ribosyltransferase-isomerase from Gloeobacter violaceus (strain ATCC 29082 / PCC 7421).